The sequence spans 420 residues: Type II methyltransferase M.HgiCI (420 aa).

Residues 2-417 enclose the SAM-dependent MTase C5-type domain; it reads LKFIDLFAGI…LDLFKSADLA (416 aa). Residue C75 is part of the active site.

The protein belongs to the class I-like SAM-binding methyltransferase superfamily. C5-methyltransferase family.

The catalysed reaction is a 2'-deoxycytidine in DNA + S-adenosyl-L-methionine = a 5-methyl-2'-deoxycytidine in DNA + S-adenosyl-L-homocysteine + H(+). Its function is as follows. A methylase that recognizes the double-stranded sequence 5'-GGYRCC-3', methylates C-5 on both strands, and protects the DNA from cleavage by the HgiCI endonuclease. The polypeptide is Type II methyltransferase M.HgiCI (hgiCIM) (Herpetosiphon aurantiacus (Herpetosiphon giganteus)).